The sequence spans 132 residues: Putative apolipoprotein(a)-like protein 2 (132 aa).

A signal peptide spans 1–21 (MEHKEVVLLLLLFLKSAPTET). One can recognise a Kringle domain in the interval 27-105 (ECYHSNGQSY…RWEYCNLTRC (79 aa)). 3 cysteine pairs are disulfide-bonded: C28-C105, C49-C88, and C77-C100. A glycan (N-linked (GlcNAc...) asparagine) is linked at N101.

As to expression, expressed in liver but not in other tissues tested.

The protein resides in the secreted. The chain is Putative apolipoprotein(a)-like protein 2 (LPAL2) from Homo sapiens (Human).